The primary structure comprises 489 residues: Argininosuccinate lyase (489 aa).

The tract at residues 462–489 (QARYQQTEPAEEPPLPPSSPGSGLPLES) is disordered.

This sequence belongs to the lyase 1 family. Argininosuccinate lyase subfamily.

The protein resides in the cytoplasm. It catalyses the reaction 2-(N(omega)-L-arginino)succinate = fumarate + L-arginine. Its pathway is amino-acid biosynthesis; L-arginine biosynthesis; L-arginine from L-ornithine and carbamoyl phosphate: step 3/3. The sequence is that of Argininosuccinate lyase from Synechococcus sp. (strain JA-3-3Ab) (Cyanobacteria bacterium Yellowstone A-Prime).